The chain runs to 279 residues: Presqualene diphosphate synthase (279 aa).

This sequence belongs to the phytoene/squalene synthase family. HpnD subfamily.

It catalyses the reaction 2 (2E,6E)-farnesyl diphosphate = presqualene diphosphate + diphosphate. It functions in the pathway secondary metabolite biosynthesis; hopanoid biosynthesis. Functionally, involved in the biosynthesis of the hopanoid precursor squalene (SQ) from farnesyl diphosphate (FPP). Catalyzes the first step, the formation of presqualene diphosphate (PSPP) from two molecules of FPP. The protein is Presqualene diphosphate synthase of Rhodopseudomonas palustris (strain ATCC BAA-98 / CGA009).